A 345-amino-acid polypeptide reads, in one-letter code: Ribosomal RNA small subunit methyltransferase C (345 aa).

Belongs to the methyltransferase superfamily. RsmC family. As to quaternary structure, monomer.

The protein localises to the cytoplasm. It carries out the reaction guanosine(1207) in 16S rRNA + S-adenosyl-L-methionine = N(2)-methylguanosine(1207) in 16S rRNA + S-adenosyl-L-homocysteine + H(+). Functionally, specifically methylates the guanine in position 1207 of 16S rRNA in the 30S particle. The sequence is that of Ribosomal RNA small subunit methyltransferase C from Shewanella denitrificans (strain OS217 / ATCC BAA-1090 / DSM 15013).